The sequence spans 382 residues: D-galactonate dehydratase (382 aa).

Residue Asp-183 coordinates Mg(2+). His-185 acts as the Proton donor in catalysis. Mg(2+) contacts are provided by Glu-209 and Glu-235. The Proton acceptor role is filled by His-285.

It belongs to the mandelate racemase/muconate lactonizing enzyme family. GalD subfamily. Requires Mg(2+) as cofactor.

The catalysed reaction is D-galactonate = 2-dehydro-3-deoxy-D-galactonate + H2O. It functions in the pathway carbohydrate acid metabolism; D-galactonate degradation; D-glyceraldehyde 3-phosphate and pyruvate from D-galactonate: step 1/3. In terms of biological role, catalyzes the dehydration of D-galactonate to 2-keto-3-deoxy-D-galactonate. This is D-galactonate dehydratase from Pectobacterium atrosepticum (strain SCRI 1043 / ATCC BAA-672) (Erwinia carotovora subsp. atroseptica).